We begin with the raw amino-acid sequence, 136 residues long: Large ribosomal subunit protein uL16 (136 aa).

Belongs to the universal ribosomal protein uL16 family. In terms of assembly, part of the 50S ribosomal subunit.

In terms of biological role, binds 23S rRNA and is also seen to make contacts with the A and possibly P site tRNAs. The chain is Large ribosomal subunit protein uL16 from Rickettsia typhi (strain ATCC VR-144 / Wilmington).